The following is a 143-amino-acid chain: SsrA-binding protein (143 aa).

It belongs to the SmpB family.

It localises to the cytoplasm. Required for rescue of stalled ribosomes mediated by trans-translation. Binds to transfer-messenger RNA (tmRNA), required for stable association of tmRNA with ribosomes. tmRNA and SmpB together mimic tRNA shape, replacing the anticodon stem-loop with SmpB. tmRNA is encoded by the ssrA gene; the 2 termini fold to resemble tRNA(Ala) and it encodes a 'tag peptide', a short internal open reading frame. During trans-translation Ala-aminoacylated tmRNA acts like a tRNA, entering the A-site of stalled ribosomes, displacing the stalled mRNA. The ribosome then switches to translate the ORF on the tmRNA; the nascent peptide is terminated with the 'tag peptide' encoded by the tmRNA and targeted for degradation. The ribosome is freed to recommence translation, which seems to be the essential function of trans-translation. The chain is SsrA-binding protein from Mycoplasmopsis synoviae (strain 53) (Mycoplasma synoviae).